A 556-amino-acid polypeptide reads, in one-letter code: Dihydroxy-acid dehydratase (556 aa).

Residue C47 coordinates [2Fe-2S] cluster. D79 contacts Mg(2+). Residue C120 coordinates [2Fe-2S] cluster. Residues D121 and K122 each coordinate Mg(2+). At K122 the chain carries N6-carboxylysine. C192 lines the [2Fe-2S] cluster pocket. E444 is a binding site for Mg(2+). S470 serves as the catalytic Proton acceptor.

Belongs to the IlvD/Edd family. Homodimer. [2Fe-2S] cluster serves as cofactor. It depends on Mg(2+) as a cofactor.

It carries out the reaction (2R)-2,3-dihydroxy-3-methylbutanoate = 3-methyl-2-oxobutanoate + H2O. The catalysed reaction is (2R,3R)-2,3-dihydroxy-3-methylpentanoate = (S)-3-methyl-2-oxopentanoate + H2O. It functions in the pathway amino-acid biosynthesis; L-isoleucine biosynthesis; L-isoleucine from 2-oxobutanoate: step 3/4. The protein operates within amino-acid biosynthesis; L-valine biosynthesis; L-valine from pyruvate: step 3/4. In terms of biological role, functions in the biosynthesis of branched-chain amino acids. Catalyzes the dehydration of (2R,3R)-2,3-dihydroxy-3-methylpentanoate (2,3-dihydroxy-3-methylvalerate) into 2-oxo-3-methylpentanoate (2-oxo-3-methylvalerate) and of (2R)-2,3-dihydroxy-3-methylbutanoate (2,3-dihydroxyisovalerate) into 2-oxo-3-methylbutanoate (2-oxoisovalerate), the penultimate precursor to L-isoleucine and L-valine, respectively. This chain is Dihydroxy-acid dehydratase, found in Prochlorococcus marinus (strain MIT 9211).